The chain runs to 266 residues: Lipooligosaccharide biosynthesis protein lic2B (266 aa).

This sequence belongs to the glycosyltransferase 25 family.

In terms of biological role, involved in extracellular lipooligosaccharide (LOS) biosynthesis and virulence expression. Involved in the synthesis of the oligosaccharide moiety of the LOS molecule by adding GalNAc. This is Lipooligosaccharide biosynthesis protein lic2B (lic2B) from Haemophilus influenzae.